Consider the following 271-residue polypeptide: Shikimate dehydrogenase (NADP(+)) (271 aa).

Shikimate contacts are provided by residues 19–21 and Thr-65; that span reads SLS. Lys-69 (proton acceptor) is an active-site residue. Residue Glu-81 participates in NADP(+) binding. 2 residues coordinate shikimate: Asn-90 and Asp-105. NADP(+)-binding positions include 128-132, 150-155, and Ile-211; these read GAGGA and NRTIEK. Tyr-213 provides a ligand contact to shikimate. Residue Gly-234 coordinates NADP(+).

Belongs to the shikimate dehydrogenase family. In terms of assembly, homodimer.

It catalyses the reaction shikimate + NADP(+) = 3-dehydroshikimate + NADPH + H(+). Its pathway is metabolic intermediate biosynthesis; chorismate biosynthesis; chorismate from D-erythrose 4-phosphate and phosphoenolpyruvate: step 4/7. Involved in the biosynthesis of the chorismate, which leads to the biosynthesis of aromatic amino acids. Catalyzes the reversible NADPH linked reduction of 3-dehydroshikimate (DHSA) to yield shikimate (SA). The polypeptide is Shikimate dehydrogenase (NADP(+)) (Pyrococcus furiosus (strain ATCC 43587 / DSM 3638 / JCM 8422 / Vc1)).